A 295-amino-acid chain; its full sequence is Pyridoxal 5'-phosphate synthase subunit PdxS (295 aa).

D25 contacts D-ribose 5-phosphate. K82 acts as the Schiff-base intermediate with D-ribose 5-phosphate in catalysis. G154 serves as a coordination point for D-ribose 5-phosphate. D-glyceraldehyde 3-phosphate is bound at residue R166. D-ribose 5-phosphate contacts are provided by residues G215 and 236–237 (GS).

Belongs to the PdxS/SNZ family. In the presence of PdxT, forms a dodecamer of heterodimers.

The enzyme catalyses aldehydo-D-ribose 5-phosphate + D-glyceraldehyde 3-phosphate + L-glutamine = pyridoxal 5'-phosphate + L-glutamate + phosphate + 3 H2O + H(+). The protein operates within cofactor biosynthesis; pyridoxal 5'-phosphate biosynthesis. Its function is as follows. Catalyzes the formation of pyridoxal 5'-phosphate from ribose 5-phosphate (RBP), glyceraldehyde 3-phosphate (G3P) and ammonia. The ammonia is provided by the PdxT subunit. Can also use ribulose 5-phosphate and dihydroxyacetone phosphate as substrates, resulting from enzyme-catalyzed isomerization of RBP and G3P, respectively. This chain is Pyridoxal 5'-phosphate synthase subunit PdxS, found in Bacillus mycoides (strain KBAB4) (Bacillus weihenstephanensis).